The primary structure comprises 558 residues: Dihydroxy-acid dehydratase (558 aa).

Cysteine 51 contributes to the [2Fe-2S] cluster binding site. Mg(2+) is bound at residue aspartate 83. Cysteine 124 contributes to the [2Fe-2S] cluster binding site. Positions 125 and 126 each coordinate Mg(2+). Lysine 126 carries the N6-carboxylysine modification. Cysteine 196 contacts [2Fe-2S] cluster. A Mg(2+)-binding site is contributed by glutamate 447. The active-site Proton acceptor is serine 473.

This sequence belongs to the IlvD/Edd family. As to quaternary structure, homodimer. The cofactor is [2Fe-2S] cluster. Mg(2+) is required as a cofactor.

It carries out the reaction (2R)-2,3-dihydroxy-3-methylbutanoate = 3-methyl-2-oxobutanoate + H2O. It catalyses the reaction (2R,3R)-2,3-dihydroxy-3-methylpentanoate = (S)-3-methyl-2-oxopentanoate + H2O. It functions in the pathway amino-acid biosynthesis; L-isoleucine biosynthesis; L-isoleucine from 2-oxobutanoate: step 3/4. The protein operates within amino-acid biosynthesis; L-valine biosynthesis; L-valine from pyruvate: step 3/4. Functions in the biosynthesis of branched-chain amino acids. Catalyzes the dehydration of (2R,3R)-2,3-dihydroxy-3-methylpentanoate (2,3-dihydroxy-3-methylvalerate) into 2-oxo-3-methylpentanoate (2-oxo-3-methylvalerate) and of (2R)-2,3-dihydroxy-3-methylbutanoate (2,3-dihydroxyisovalerate) into 2-oxo-3-methylbutanoate (2-oxoisovalerate), the penultimate precursor to L-isoleucine and L-valine, respectively. The protein is Dihydroxy-acid dehydratase of Flavobacterium psychrophilum (strain ATCC 49511 / DSM 21280 / CIP 103535 / JIP02/86).